A 448-amino-acid polypeptide reads, in one-letter code: Putative carbonic anhydrase 2 (448 aa).

One can recognise an Alpha-carbonic anhydrase domain in the interval alanine 1–isoleucine 222. Histidine 19 provides a ligand contact to Zn(2+). Asparagine 139 and asparagine 198 each carry an N-linked (GlcNAc...) asparagine glycan. A disordered region spans residues arginine 229–asparagine 448. Acidic residues predominate over residues aspartate 245–aspartate 280. Basic and acidic residues-rich tracts occupy residues aspartate 281–glycine 334 and arginine 342–asparagine 354. Asparagine 314 carries an N-linked (GlcNAc...) asparagine glycan. Gly residues predominate over residues asparagine 357–glycine 368. The segment covering glycine 370–asparagine 379 has biased composition (basic and acidic residues). Asparagine 385 carries an N-linked (GlcNAc...) asparagine glycan. Positions glycine 386–arginine 421 are enriched in basic and acidic residues. Over residues arginine 422–glycine 435 the composition is skewed to basic residues. A compositionally biased stretch (basic and acidic residues) spans arginine 436–asparagine 448.

The protein belongs to the alpha-carbonic anhydrase family. Component of the acid-insoluble and acid-soluble organic matrix of calcified layers of the shell (at protein level).

The protein localises to the secreted. The enzyme catalyses hydrogencarbonate + H(+) = CO2 + H2O. In terms of biological role, reversible hydration of carbon dioxide. The protein is Putative carbonic anhydrase 2 of Lottia gigantea (Giant owl limpet).